A 92-amino-acid polypeptide reads, in one-letter code: YcgL domain-containing protein Shewmr7_2249 (92 aa).

The YcgL domain maps to 1–85 (MLCAVYKSSR…PQVNLLAEHR (85 aa)).

The sequence is that of YcgL domain-containing protein Shewmr7_2249 from Shewanella sp. (strain MR-7).